Consider the following 1219-residue polypeptide: A disintegrin and metalloproteinase with thrombospondin motifs 18 (1219 aa).

A signal peptide spans 1–47 (MECALLCLCALRAAGPGPPWGPAGLGRLAKALQLCCFCCASVAVALA). The propeptide occupies 48–284 (SDSGSSGGSG…EYGGTGRPRR (237 aa)). Residues asparagine 151 and asparagine 190 are each glycosylated (N-linked (GlcNAc...) asparagine). Residues 217 to 248 (YPGSQRTYPGHSPSHTPPASQSQEPEYSHRRW) form a disordered region. Polar residues predominate over residues 218–241 (PGSQRTYPGHSPSHTPPASQSQEP). Residues 293–498 (LNVETLVVAD…PQAGCLVDEP (206 aa)) form the Peptidase M12B domain. Cystine bridges form between cysteine 369–cysteine 420, cysteine 395–cysteine 402, cysteine 414–cysteine 493, cysteine 453–cysteine 477, cysteine 521–cysteine 546, cysteine 532–cysteine 553, cysteine 541–cysteine 572, cysteine 566–cysteine 577, cysteine 601–cysteine 638, cysteine 605–cysteine 643, and cysteine 616–cysteine 628. Histidine 436 contributes to the Zn(2+) binding site. Residue glutamate 437 is part of the active site. Histidine 440 and histidine 446 together coordinate Zn(2+). The TSP type-1 1 domain maps to 589–644 (HGQWSAWSKWSECSRTCGGGVKFQERHCSNPKPQYGGKYCPGSSRIYKLCNINPCP). Asparagine 745, asparagine 838, asparagine 865, and asparagine 909 each carry an N-linked (GlcNAc...) asparagine glycan. 4 consecutive TSP type-1 domains span residues 931 to 990 (CPAY…NSHA), 991 to 1049 (CPPE…GRCP), 1052 to 1116 (NRLQ…RTCP), and 1121 to 1176 (AVAS…NFCP). Residues 1182–1219 (DDPSCVDFFSWCHLVPQHGVCNHKFYGKQCCRSCTRKS) form the PLAC domain.

The cofactor is Zn(2+). The precursor is cleaved by a furin endopeptidase. In terms of processing, glycosylated. Can be O-fucosylated by POFUT2 on a serine or a threonine residue found within the consensus sequence C1-X(2)-(S/T)-C2-G of the TSP type-1 repeat domains where C1 and C2 are the first and second cysteine residue of the repeat, respectively. Fucosylated repeats can then be further glycosylated by the addition of a beta-1,3-glucose residue by the glucosyltransferase, B3GALTL. Fucosylation mediates the efficient secretion of ADAMTS family members. Can also be C-glycosylated with one or two mannose molecules on tryptophan residues within the consensus sequence W-X-X-W of the TPRs, and N-glycosylated. These other glycosylations can also facilitate secretion.

The protein localises to the secreted. It is found in the extracellular space. It localises to the extracellular matrix. This is A disintegrin and metalloproteinase with thrombospondin motifs 18 (Adamts18) from Mus musculus (Mouse).